Reading from the N-terminus, the 264-residue chain is ATP synthase subunit a (264 aa).

The next 6 membrane-spanning stretches (helical) occupy residues 32–52 (IDSLFFSVGLGVLFLWLFHSV), 89–109 (VIAPLALTIFVWVFMMNFMDM), 134–154 (DLNITFSMAIGVFLLIIYYSI), 177–197 (IPVNFLLETVTLIAKPISLAL), 208–228 (LIFILIALMYGANWALSTLGV), and 235–255 (LIFHILVITLQAFIFMMLTIV).

The protein belongs to the ATPase A chain family. F-type ATPases have 2 components, CF(1) - the catalytic core - and CF(0) - the membrane proton channel. CF(1) has five subunits: alpha(3), beta(3), gamma(1), delta(1), epsilon(1). CF(0) has three main subunits: a(1), b(2) and c(9-12). The alpha and beta chains form an alternating ring which encloses part of the gamma chain. CF(1) is attached to CF(0) by a central stalk formed by the gamma and epsilon chains, while a peripheral stalk is formed by the delta and b chains.

It is found in the cell inner membrane. In terms of biological role, key component of the proton channel; it plays a direct role in the translocation of protons across the membrane. This chain is ATP synthase subunit a, found in Shewanella piezotolerans (strain WP3 / JCM 13877).